Reading from the N-terminus, the 509-residue chain is Lysine--tRNA ligase (509 aa).

The Mg(2+) site is built by Glu-395 and Glu-402.

This sequence belongs to the class-II aminoacyl-tRNA synthetase family. Homodimer. Mg(2+) is required as a cofactor.

It localises to the cytoplasm. The enzyme catalyses tRNA(Lys) + L-lysine + ATP = L-lysyl-tRNA(Lys) + AMP + diphosphate. This is Lysine--tRNA ligase from Fervidobacterium nodosum (strain ATCC 35602 / DSM 5306 / Rt17-B1).